A 174-amino-acid polypeptide reads, in one-letter code: Superoxide dismutase [Cu-Zn] (174 aa).

Positions 1 to 23 (MIRLSAAAALGLAAALAASPALA) are cleaved as a signal peptide. 3 residues coordinate Cu cation: His68, His70, and His86. A disulfide bridge connects residues Cys75 and Cys170. Residues His86, His95, Asp104, and Asp107 each contribute to the Zn(2+) site. A Cu cation-binding site is contributed by His150.

This sequence belongs to the Cu-Zn superoxide dismutase family. In terms of assembly, homodimer. Cu cation serves as cofactor. Requires Zn(2+) as cofactor.

It localises to the periplasm. The catalysed reaction is 2 superoxide + 2 H(+) = H2O2 + O2. Destroys radicals which are normally produced within the cells and which are toxic to biological systems. May function against extracytoplasmic toxic oxygen species. The polypeptide is Superoxide dismutase [Cu-Zn] (sodC) (Caulobacter vibrioides (strain ATCC 19089 / CIP 103742 / CB 15) (Caulobacter crescentus)).